A 159-amino-acid chain; its full sequence is Ribosomal RNA large subunit methyltransferase H (159 aa).

S-adenosyl-L-methionine is bound by residues Leu76, Gly108, and 127–132 (FSPMTF).

It belongs to the RNA methyltransferase RlmH family. In terms of assembly, homodimer.

The protein resides in the cytoplasm. The catalysed reaction is pseudouridine(1915) in 23S rRNA + S-adenosyl-L-methionine = N(3)-methylpseudouridine(1915) in 23S rRNA + S-adenosyl-L-homocysteine + H(+). Functionally, specifically methylates the pseudouridine at position 1915 (m3Psi1915) in 23S rRNA. This Alkaliphilus metalliredigens (strain QYMF) protein is Ribosomal RNA large subunit methyltransferase H.